A 131-amino-acid chain; its full sequence is Snaclec alboaggregin-A subunit alpha (131 aa).

Residues 1–131 (DCPSDWSSYD…EYPFVCKFXR (131 aa)) enclose the C-type lectin domain. 3 cysteine pairs are disulfide-bonded: Cys2/Cys13, Cys30/Cys127, and Cys102/Cys119.

Belongs to the snaclec family. In terms of assembly, heterotetramer of the subunits alpha, alpha', beta and beta'; disulfide-linked. As to expression, expressed by the venom gland.

It is found in the secreted. Functionally, potent platelet activator that aggregates platelets via both GPIbalpha (GP1BA) and GPVI (GP6). Induces a tyrosine phosphorylation profile in platelets that resembles this produced by collagen, involving the time dependent tyrosine phosphorylation of Fc receptor gamma chain (FCGR1A), phospholipase Cgamma2 (PLCG2), and LAT. This chain is Snaclec alboaggregin-A subunit alpha, found in Trimeresurus albolabris (White-lipped pit viper).